Reading from the N-terminus, the 346-residue chain is Protein RecA (346 aa).

65–72 (GPESSGKT) lines the ATP pocket.

This sequence belongs to the RecA family.

Its subcellular location is the cytoplasm. Functionally, can catalyze the hydrolysis of ATP in the presence of single-stranded DNA, the ATP-dependent uptake of single-stranded DNA by duplex DNA, and the ATP-dependent hybridization of homologous single-stranded DNAs. It interacts with LexA causing its activation and leading to its autocatalytic cleavage. This is Protein RecA from Enterococcus mundtii.